The primary structure comprises 147 residues: Large ribosomal subunit protein uL13 (147 aa).

This sequence belongs to the universal ribosomal protein uL13 family. As to quaternary structure, part of the 50S ribosomal subunit.

Its function is as follows. This protein is one of the early assembly proteins of the 50S ribosomal subunit, although it is not seen to bind rRNA by itself. It is important during the early stages of 50S assembly. The sequence is that of Large ribosomal subunit protein uL13 from Kineococcus radiotolerans (strain ATCC BAA-149 / DSM 14245 / SRS30216).